Reading from the N-terminus, the 610-residue chain is Elongation factor 4 (610 aa).

Residues 14-198 (ANIRNFSIVA…AIVTRLPPPQ (185 aa)) enclose the tr-type G domain. Residues 26–31 (DHGKST) and 145–148 (NKVD) contribute to the GTP site.

The protein belongs to the TRAFAC class translation factor GTPase superfamily. Classic translation factor GTPase family. LepA subfamily.

The protein resides in the cell inner membrane. It carries out the reaction GTP + H2O = GDP + phosphate + H(+). Functionally, required for accurate and efficient protein synthesis under certain stress conditions. May act as a fidelity factor of the translation reaction, by catalyzing a one-codon backward translocation of tRNAs on improperly translocated ribosomes. Back-translocation proceeds from a post-translocation (POST) complex to a pre-translocation (PRE) complex, thus giving elongation factor G a second chance to translocate the tRNAs correctly. Binds to ribosomes in a GTP-dependent manner. This is Elongation factor 4 from Nitrobacter hamburgensis (strain DSM 10229 / NCIMB 13809 / X14).